Here is an 89-residue protein sequence, read N- to C-terminus: Small ribosomal subunit protein uS15 (89 aa).

Belongs to the universal ribosomal protein uS15 family. Part of the 30S ribosomal subunit. Forms a bridge to the 50S subunit in the 70S ribosome, contacting the 23S rRNA.

Functionally, one of the primary rRNA binding proteins, it binds directly to 16S rRNA where it helps nucleate assembly of the platform of the 30S subunit by binding and bridging several RNA helices of the 16S rRNA. In terms of biological role, forms an intersubunit bridge (bridge B4) with the 23S rRNA of the 50S subunit in the ribosome. This is Small ribosomal subunit protein uS15 from Bordetella parapertussis (strain 12822 / ATCC BAA-587 / NCTC 13253).